We begin with the raw amino-acid sequence, 609 residues long: Proteasome-associated ATPase (609 aa).

The tract at residues 1–24 (MADSERSEAFGTPDDTPLSSNDAA) is disordered. Residues 19–96 (SSNDAAELEQ…LREEVDRLGQ (78 aa)) adopt a coiled-coil conformation. Residue 296-301 (GCGKTL) coordinates ATP. A docks into pockets in the proteasome alpha-ring region spans residues 608–609 (YL).

It belongs to the AAA ATPase family. As to quaternary structure, homohexamer. Assembles into a hexameric ring structure that caps the 20S proteasome core. Strongly interacts with the prokaryotic ubiquitin-like protein Pup through a hydrophobic interface; the interacting region of ARC lies in its N-terminal coiled-coil domain. There is one Pup binding site per ARC hexamer ring. Upon ATP-binding, the C-terminus of ARC interacts with the alpha-rings of the proteasome core, possibly by binding to the intersubunit pockets.

It functions in the pathway protein degradation; proteasomal Pup-dependent pathway. In terms of biological role, ATPase which is responsible for recognizing, binding, unfolding and translocation of pupylated proteins into the bacterial 20S proteasome core particle. May be essential for opening the gate of the 20S proteasome via an interaction with its C-terminus, thereby allowing substrate entry and access to the site of proteolysis. Thus, the C-termini of the proteasomal ATPase may function like a 'key in a lock' to induce gate opening and therefore regulate proteolysis. The chain is Proteasome-associated ATPase from Mycobacterium ulcerans (strain Agy99).